We begin with the raw amino-acid sequence, 418 residues long: MAGRLPACVVDCGTGYTKLGYAGNTEPQFIMPSCIAIKESSKVGDQAQRRMMRGVDDLDFFIGDEAIDKPPYATKWPIRHGIVEDWDLMERFMEQIIFKYLRAEPEDHYFLLTEPPLNTPENREYTAEIMFESFNVPGLYIAVQAVLALAASWTSRQVGERTLTGTVIDSGDGVTHVIPVAEGYVIGSCIKHIPIAGRDITYFTQQLLREREVGIPPEQSLETAKAVKERFSYVCPDLVKEFNKYDTDGSKWIKQYTGINAITKKEFTIDVGYERFLGPEIFFHPEFANPDFTQPISEVVDEVIQNCPIDVRRPLYKNIVLSGGSTMFRDFGRRLQRDLKRTVDARLKMSEELSGGKLKPKPIDVQVITHHMQRYAVWFGGSMLASTPEFYQVCHTKKDYEEIGPSICRHNPVFGVMS.

The protein belongs to the actin family. ARP3 subfamily. As to quaternary structure, component of the Arp2/3 complex composed of actr2/arp2, actr3/arp3, arpc1b, arpc2, arpc3, arpc4 and arpc5.

Its subcellular location is the cytoplasm. The protein resides in the cytoskeleton. It is found in the cell projection. It localises to the nucleus. Its function is as follows. ATP-binding component of the Arp2/3 complex, a multiprotein complex that mediates actin polymerization upon stimulation by nucleation-promoting factor (NPF). The Arp2/3 complex mediates the formation of branched actin networks in the cytoplasm, providing the force for cell motility. Seems to contact the pointed end of the daughter actin filament. In addition to its role in the cytoplasmic cytoskeleton, the Arp2/3 complex also promotes actin polymerization in the nucleus, thereby regulating gene transcription and repair of damaged DNA. The Arp2/3 complex promotes homologous recombination (HR) repair in response to DNA damage by promoting nuclear actin polymerization, leading to drive motility of double-strand breaks (DSBs). This chain is Actin-related protein 3 (actr3), found in Takifugu rubripes (Japanese pufferfish).